The primary structure comprises 246 residues: Probable transcriptional regulatory protein YebC (246 aa).

The segment at 1-20 (MAGHSKWANTRHRKAAQDAK) is disordered.

This sequence belongs to the TACO1 family.

The protein localises to the cytoplasm. This chain is Probable transcriptional regulatory protein YebC, found in Salmonella choleraesuis (strain SC-B67).